We begin with the raw amino-acid sequence, 177 residues long: Large ribosomal subunit protein uL10 (177 aa).

The protein belongs to the universal ribosomal protein uL10 family. As to quaternary structure, part of the ribosomal stalk of the 50S ribosomal subunit. The N-terminus interacts with L11 and the large rRNA to form the base of the stalk. The C-terminus forms an elongated spine to which L12 dimers bind in a sequential fashion forming a multimeric L10(L12)X complex.

Its function is as follows. Forms part of the ribosomal stalk, playing a central role in the interaction of the ribosome with GTP-bound translation factors. This Leptospira interrogans serogroup Icterohaemorrhagiae serovar copenhageni (strain Fiocruz L1-130) protein is Large ribosomal subunit protein uL10.